An 81-amino-acid chain; its full sequence is YcgL domain-containing protein Tgr7_3126 (81 aa).

In terms of domain architecture, YcgL spans 1 to 81 (MQVYVYKSRR…QMPPQNERPL (81 aa)).

This is YcgL domain-containing protein Tgr7_3126 from Thioalkalivibrio sulfidiphilus (strain HL-EbGR7).